Consider the following 32-residue polypeptide: Acetolactate synthase, catabolic (32 aa).

Belongs to the TPP enzyme family. In terms of assembly, homodimer.

It catalyses the reaction 2 pyruvate + H(+) = (2S)-2-acetolactate + CO2. Its pathway is polyol metabolism; (R,R)-butane-2,3-diol biosynthesis; (R,R)-butane-2,3-diol from pyruvate: step 1/3. This Klebsiella aerogenes (Enterobacter aerogenes) protein is Acetolactate synthase, catabolic (budB).